The sequence spans 171 residues: Glutamyl-tRNA(Gln) amidotransferase subunit F, mitochondrial (171 aa).

This sequence belongs to the GatF family. As to quaternary structure, subunit of the heterotrimeric GatFAB amidotransferase (AdT) complex, composed of A, B and F subunits.

It is found in the mitochondrion inner membrane. It carries out the reaction L-glutamyl-tRNA(Gln) + L-glutamine + ATP + H2O = L-glutaminyl-tRNA(Gln) + L-glutamate + ADP + phosphate + H(+). Its function is as follows. Allows the formation of correctly charged Gln-tRNA(Gln) through the transamidation of misacylated Glu-tRNA(Gln) in the mitochondria. The reaction takes place in the presence of glutamine and ATP through an activated gamma-phospho-Glu-tRNA(Gln). Required for proper protein synthesis within the mitochondrion. The sequence is that of Glutamyl-tRNA(Gln) amidotransferase subunit F, mitochondrial from Zygosaccharomyces rouxii (strain ATCC 2623 / CBS 732 / NBRC 1130 / NCYC 568 / NRRL Y-229).